The chain runs to 442 residues: D-serine dehydratase (442 aa).

Lys-118 is modified (N6-(pyridoxal phosphate)lysine).

The protein belongs to the serine/threonine dehydratase family. DsdA subfamily. Monomer. It depends on pyridoxal 5'-phosphate as a cofactor.

It carries out the reaction D-serine = pyruvate + NH4(+). In Shigella sonnei (strain Ss046), this protein is D-serine dehydratase.